The chain runs to 311 residues: Ribosomal RNA small subunit methyltransferase H (311 aa).

S-adenosyl-L-methionine is bound by residues 32 to 34 (AGH), aspartate 52, phenylalanine 79, aspartate 100, and glutamine 107.

This sequence belongs to the methyltransferase superfamily. RsmH family.

It is found in the cytoplasm. It catalyses the reaction cytidine(1402) in 16S rRNA + S-adenosyl-L-methionine = N(4)-methylcytidine(1402) in 16S rRNA + S-adenosyl-L-homocysteine + H(+). In terms of biological role, specifically methylates the N4 position of cytidine in position 1402 (C1402) of 16S rRNA. This chain is Ribosomal RNA small subunit methyltransferase H, found in Staphylococcus haemolyticus (strain JCSC1435).